Reading from the N-terminus, the 518-residue chain is 2-isopropylmalate synthase (518 aa).

The Pyruvate carboxyltransferase domain maps to 4-266 (INFFDTTLRD…ESTIQLNEIK (263 aa)). Residues Asp13, His201, His203, and Asn237 each coordinate Mn(2+). Residues 391–518 (DFISLQVHYG…GLSKQAAVGS (128 aa)) form a regulatory domain region.

This sequence belongs to the alpha-IPM synthase/homocitrate synthase family. LeuA type 1 subfamily. As to quaternary structure, homodimer. The cofactor is Mn(2+).

The protein resides in the cytoplasm. It carries out the reaction 3-methyl-2-oxobutanoate + acetyl-CoA + H2O = (2S)-2-isopropylmalate + CoA + H(+). It participates in amino-acid biosynthesis; L-leucine biosynthesis; L-leucine from 3-methyl-2-oxobutanoate: step 1/4. Its function is as follows. Catalyzes the condensation of the acetyl group of acetyl-CoA with 3-methyl-2-oxobutanoate (2-ketoisovalerate) to form 3-carboxy-3-hydroxy-4-methylpentanoate (2-isopropylmalate). This is 2-isopropylmalate synthase from Bacillus licheniformis (strain ATCC 14580 / DSM 13 / JCM 2505 / CCUG 7422 / NBRC 12200 / NCIMB 9375 / NCTC 10341 / NRRL NRS-1264 / Gibson 46).